The chain runs to 283 residues: Foldase protein PrsA 3 (283 aa).

A signal peptide spans Met1–Ala21. Cys22 carries N-palmitoyl cysteine lipidation. Cys22 is lipidated: S-diacylglycerol cysteine. A PpiC domain is found at Lys132–Asp222.

It belongs to the PrsA family.

It is found in the cell membrane. The catalysed reaction is [protein]-peptidylproline (omega=180) = [protein]-peptidylproline (omega=0). Its function is as follows. Plays a major role in protein secretion by helping the post-translocational extracellular folding of several secreted proteins. Important for the secretion of the protective antigen. The three PsrA proteins in this organism show different but overlapping substrate specificities. This Bacillus anthracis protein is Foldase protein PrsA 3 (prsA3).